Here is a 118-residue protein sequence, read N- to C-terminus: Beta-2-microglobulin (118 aa).

The N-terminal stretch at 1-20 (MARVVALVLLGLLSLTGLEA) is a signal peptide. One can recognise an Ig-like C1-type domain in the interval 22–115 (PRVPKVQVYS…LKDPLIVKWD (94 aa)). A disulfide bridge connects residues Cys45 and Cys99.

It belongs to the beta-2-microglobulin family. Heterodimer of an alpha chain and a beta chain. Beta-2-microglobulin is the beta-chain of major histocompatibility complex class I molecules.

It is found in the secreted. Its function is as follows. Component of the class I major histocompatibility complex (MHC). Involved in the presentation of peptide antigens to the immune system. The polypeptide is Beta-2-microglobulin (B2M) (Equus caballus (Horse)).